The sequence spans 37 residues: Large ribosomal subunit protein bL36A (37 aa).

Belongs to the bacterial ribosomal protein bL36 family.

In Haemophilus ducreyi (strain 35000HP / ATCC 700724), this protein is Large ribosomal subunit protein bL36A.